The primary structure comprises 335 residues: MKTYYEQDANVGLLQGKTVAVIGYGSQGHAQAQNLRDSGVEVVVGVRPGKSFEVAKADGFKVMSVSEAVRTAQVVQMLLPDEQQAHVYKAEVEENLREGQMLLFSHGFNIHFGQINPPSYVDVAMVAPKSPGHLVRRVFQEGNGVPALVAVHQDATGTALHVALAYAKGVGCTRAGVIETTFQEETETDLFGEQAVLCGGVTALVKAGFETLTEGGYRPEIAYFECLHELKLIVDLMYEGGLTNMRHSISDTAEFGDYVTGSRIVTDETKKEMKRVLTEIQQGEFAKKWILENQAGRPTYNAMKKAEQNHQLEKVGEELREMMSWIHAPKELVKK.

Residues 1 to 180 (MKTYYEQDAN…GCTRAGVIET (180 aa)) enclose the KARI N-terminal Rossmann domain. Residues 24-27 (YGSQ), Arg-47, Ser-51, and 81-84 (DEQQ) contribute to the NADP(+) site. His-106 is a catalytic residue. NADP(+) is bound at residue Gly-132. In terms of domain architecture, KARI C-terminal knotted spans 181 to 326 (TFQEETETDL…EELREMMSWI (146 aa)). Mg(2+) contacts are provided by Asp-189, Glu-193, Glu-225, and Glu-229. Ser-250 is a binding site for substrate.

It belongs to the ketol-acid reductoisomerase family. Mg(2+) serves as cofactor.

The enzyme catalyses (2R)-2,3-dihydroxy-3-methylbutanoate + NADP(+) = (2S)-2-acetolactate + NADPH + H(+). The catalysed reaction is (2R,3R)-2,3-dihydroxy-3-methylpentanoate + NADP(+) = (S)-2-ethyl-2-hydroxy-3-oxobutanoate + NADPH + H(+). It functions in the pathway amino-acid biosynthesis; L-isoleucine biosynthesis; L-isoleucine from 2-oxobutanoate: step 2/4. Its pathway is amino-acid biosynthesis; L-valine biosynthesis; L-valine from pyruvate: step 2/4. Functionally, involved in the biosynthesis of branched-chain amino acids (BCAA). Catalyzes an alkyl-migration followed by a ketol-acid reduction of (S)-2-acetolactate (S2AL) to yield (R)-2,3-dihydroxy-isovalerate. In the isomerase reaction, S2AL is rearranged via a Mg-dependent methyl migration to produce 3-hydroxy-3-methyl-2-ketobutyrate (HMKB). In the reductase reaction, this 2-ketoacid undergoes a metal-dependent reduction by NADPH to yield (R)-2,3-dihydroxy-isovalerate. The polypeptide is Ketol-acid reductoisomerase (NADP(+)) 2 (Bacillus thuringiensis subsp. konkukian (strain 97-27)).